We begin with the raw amino-acid sequence, 98 residues long: Putative protein adenylyltransferase MJ1217 (98 aa).

The GSX(10)DXD motif motif lies at 31 to 45 (GSYAREEQKETSDID). Asp-43, Asp-45, and Asp-75 together coordinate Mg(2+).

The protein belongs to the MntA antitoxin family. Probably forms a complex with cognate toxin MJ1216. It depends on Mg(2+) as a cofactor.

It carries out the reaction L-tyrosyl-[protein] + ATP = O-(5'-adenylyl)-L-tyrosyl-[protein] + diphosphate. It catalyses the reaction O-(5'-adenylyl)-L-tyrosyl-[protein] + ATP = O-[5'-(adenylyl-(5'-&gt;3')-adenylyl)]-L-tyrosyl-[protein] + diphosphate. Its function is as follows. Probable antitoxin component of a putative type VII toxin-antitoxin (TA) system. Neutralizes cognate toxic MJ1216 by di-AMPylation. The polypeptide is Putative protein adenylyltransferase MJ1217 (Methanocaldococcus jannaschii (strain ATCC 43067 / DSM 2661 / JAL-1 / JCM 10045 / NBRC 100440) (Methanococcus jannaschii)).